Consider the following 175-residue polypeptide: Nucleoside triphosphate/diphosphate phosphatase (175 aa).

Residue Arg-23 is the Proton donor of the active site. 6 residues coordinate Mg(2+): Asn-87, Asp-103, Asp-105, Asp-107, Asp-120, and Glu-123.

Belongs to the Ntdp family. Requires Mg(2+) as cofactor.

The enzyme catalyses a ribonucleoside 5'-triphosphate + H2O = a ribonucleoside 5'-diphosphate + phosphate + H(+). The catalysed reaction is a ribonucleoside 5'-diphosphate + H2O = a ribonucleoside 5'-phosphate + phosphate + H(+). Functionally, has nucleoside phosphatase activity towards nucleoside triphosphates and nucleoside diphosphates. The protein is Nucleoside triphosphate/diphosphate phosphatase of Listeria innocua serovar 6a (strain ATCC BAA-680 / CLIP 11262).